The following is a 568-amino-acid chain: Probable inactive poly [ADP-ribose] polymerase SRO1 (568 aa).

Basic and acidic residues predominate over residues methionine 1–glycine 18. The segment at methionine 1–serine 32 is disordered. A WWE domain is found at arginine 77–tryptophan 152. Disordered stretches follow at residues aspartate 220–serine 241 and isoleucine 453–arginine 500. In terms of domain architecture, PARP catalytic spans aspartate 245–serine 463. In terms of domain architecture, RST spans arginine 497–glycine 568.

Interacts with DREB2A, DREB2B, DREB2C and NAC082. In terms of tissue distribution, expressed in young developing tissues, such as young leaves and flowers and root tips. In mature plants, expressed in vasculature of leaves and roots.

The protein resides in the nucleus matrix. Functionally, probable inactive ADP-ribosyltransferase that functions with RCD1 to regulate oxidative stress, hormonal and developmental responses. May regulate some stress-responsive genes. Seems to play a smaller developmental role than R. The protein is Probable inactive poly [ADP-ribose] polymerase SRO1 (SRO1) of Arabidopsis thaliana (Mouse-ear cress).